A 331-amino-acid chain; its full sequence is MVTASSSVRVSNEDECFIYDIEQLKDNVVVSYSTGSWSCFDKGTLLEIFKVPKAHTNITGIISCDQLNGVITCGSEGEIHLWDIRSQAKSAVRSWTQQSTPFTCIALNKKNQFATGSELTRSLASVQLWDVRSEQKLIRQWNDAHNDDITHLQFHPKDNELLLTGSVDGLVSLLDTTKEEDSTDPEEDPLLHVINHGASIHLAKFVSKKRVMVLSHMESYAMYKLKRDKDEKTWSSNELFSIDDLRAELSCSYVINEVSTSDKQFCALAFGDFSNHETKFVLVDTSTGELKKEPTKLERASEEICRAISFDVKNDVYYSGGEDGLLQAFRV.

WD repeat units follow at residues lysine 53–valine 92, glutamine 97–arginine 139, alanine 144–aspartate 184, and alanine 300–valine 331.

The protein localises to the cytoplasm. Its subcellular location is the nucleus. This is an uncharacterized protein from Schizosaccharomyces pombe (strain 972 / ATCC 24843) (Fission yeast).